A 356-amino-acid polypeptide reads, in one-letter code: GTPase Obg (356 aa).

The 158-residue stretch at 1–158 (MFIDSVKITL…RLVRLELKLI (158 aa)) folds into the Obg domain. Residues 159–339 (ADVGLVGFPN…LKFMLLEEIK (181 aa)) enclose the OBG-type G domain. GTP-binding positions include 165 to 172 (GFPNVGKS), 190 to 194 (FTTLT), 212 to 215 (DIPG), 280 to 283 (SKSD), and 320 to 322 (SSL). Mg(2+) is bound by residues S172 and T192.

Belongs to the TRAFAC class OBG-HflX-like GTPase superfamily. OBG GTPase family. In terms of assembly, monomer. Requires Mg(2+) as cofactor.

The protein resides in the cytoplasm. Functionally, an essential GTPase which binds GTP, GDP and possibly (p)ppGpp with moderate affinity, with high nucleotide exchange rates and a fairly low GTP hydrolysis rate. Plays a role in control of the cell cycle, stress response, ribosome biogenesis and in those bacteria that undergo differentiation, in morphogenesis control. The sequence is that of GTPase Obg from Campylobacter jejuni subsp. jejuni serotype O:23/36 (strain 81-176).